A 183-amino-acid polypeptide reads, in one-letter code: Nucleosome assembly protein 1-like 5 (183 aa).

A disordered region spans residues 1-71 (MADSENQGPA…APKPKNDFIE (71 aa)). Low complexity-rich tracts occupy residues 7–21 (QGPAEPSQAAAAAEA) and 28–49 (AEGGAQGGDCDSAAGDPDSAAG). The stretch at 81-107 (VLALKKLQKRCDKIEAKFDKEFQALEK) forms a coiled coil. Residues 135–161 (EGEEEEEEEYEDDEEEGEEEEEEEEAA) show a composition bias toward acidic residues. The disordered stretch occupies residues 135 to 183 (EGEEEEEEEYEDDEEEGEEEEEEEEAAAEAAAGAKHDDAHAEMPDDAKK). The span at 168 to 183 (AKHDDAHAEMPDDAKK) shows a compositional bias: basic and acidic residues.

The protein belongs to the nucleosome assembly protein (NAP) family.

The protein localises to the nucleus. In Pongo abelii (Sumatran orangutan), this protein is Nucleosome assembly protein 1-like 5 (NAP1L5).